The sequence spans 577 residues: Beta-fructofuranosidase, insoluble isoenzyme 1 (577 aa).

The first 22 residues, 1-22 (MGTRLLALAPWLLLLLLQLAGA), serve as a signal peptide directing secretion. Residue Asp-63 is part of the active site. N-linked (GlcNAc...) asparagine glycosylation is found at Asn-158, Asn-183, and Asn-333.

It belongs to the glycosyl hydrolase 32 family.

Its subcellular location is the secreted. The protein resides in the extracellular space. It is found in the apoplast. The protein localises to the cell wall. It catalyses the reaction Hydrolysis of terminal non-reducing beta-D-fructofuranoside residues in beta-D-fructofuranosides.. May play a role in sucrose partitioning during seed development and in stress response. This chain is Beta-fructofuranosidase, insoluble isoenzyme 1 (CIN1), found in Oryza sativa subsp. indica (Rice).